A 666-amino-acid polypeptide reads, in one-letter code: Probable potassium transport system protein Kup (666 aa).

The next 12 helical transmembrane spans lie at 16–36, 58–78, 99–119, 141–161, 167–187, 221–241, 253–273, 292–312, 343–363, 373–393, 402–422, and 424–444; these read GFII…LYTM, ISLI…LVAL, TPWL…DGAL, IFQN…LLFA, TGVI…FLGI, IFIL…YSDL, WPFV…WILA, FTMH…QALI, TYIP…VLLF, YGLA…FFLI, VLLM…ASAV, and FMHG…IMTI.

This sequence belongs to the HAK/KUP transporter (TC 2.A.72) family.

The protein localises to the cell membrane. It catalyses the reaction K(+)(in) + H(+)(in) = K(+)(out) + H(+)(out). Its function is as follows. Transport of potassium into the cell. Likely operates as a K(+):H(+) symporter. The sequence is that of Probable potassium transport system protein Kup from Streptococcus agalactiae serotype V (strain ATCC BAA-611 / 2603 V/R).